Consider the following 634-residue polypeptide: Chaperone protein HtpG (634 aa).

Residues M1–R342 form an a; substrate-binding region. The b stretch occupies residues E343–Q559. The c stretch occupies residues L560–V634.

It belongs to the heat shock protein 90 family. In terms of assembly, homodimer.

The protein localises to the cytoplasm. Functionally, molecular chaperone. Has ATPase activity. This chain is Chaperone protein HtpG, found in Xanthomonas oryzae pv. oryzae (strain MAFF 311018).